Here is a 396-residue protein sequence, read N- to C-terminus: MLHMGRKRVSVFGSTGCIGQKAVQILRDNPDDFEVVALVAKQDAHLLASQARLLSANMAVVAEDAAYETLRELLRGTCVEVGAGTAGVMDAASRDVDSAVMAITGIAALHPVIRLIKSGVKSIALANKESVVCGGELLINAAKQTGVNIVPVDSEHNAVFQILAHDGCVARVTLTASGGPFLRWTREQMQAVTPSDALAHPVWKMGRKISVDSATMVNKALEVIEAHYLFSLDPDSIDVTVHPESVVHAVAAYPNGTSISLMSVPDMGIPTLHALYWPQSATVCGSTLDLASYGKLTFMEPDLERFPALGFGFEALRSSKPRAACIALNAANEVAVEAFLNFEIAFLDIPNIIMSAMDKLACCEVNSISEAGEYDLICRARTREICDTLKVSEFIR.

Residues Thr15, Gly16, Ile18, and Asn127 each coordinate NADPH. A 1-deoxy-D-xylulose 5-phosphate-binding site is contributed by Lys128. Glu129 is an NADPH binding site. Asp153 serves as a coordination point for Mn(2+). Residues Ser154, Glu155, Ser177, and His200 each contribute to the 1-deoxy-D-xylulose 5-phosphate site. Glu155 is a binding site for Mn(2+). Gly206 is an NADPH binding site. 1-deoxy-D-xylulose 5-phosphate contacts are provided by Ser213, Asn218, Lys219, and Glu222. Glu222 lines the Mn(2+) pocket.

This sequence belongs to the DXR family. Mg(2+) is required as a cofactor. Requires Mn(2+) as cofactor.

It carries out the reaction 2-C-methyl-D-erythritol 4-phosphate + NADP(+) = 1-deoxy-D-xylulose 5-phosphate + NADPH + H(+). Its pathway is isoprenoid biosynthesis; isopentenyl diphosphate biosynthesis via DXP pathway; isopentenyl diphosphate from 1-deoxy-D-xylulose 5-phosphate: step 1/6. Catalyzes the NADPH-dependent rearrangement and reduction of 1-deoxy-D-xylulose-5-phosphate (DXP) to 2-C-methyl-D-erythritol 4-phosphate (MEP). The polypeptide is 1-deoxy-D-xylulose 5-phosphate reductoisomerase (Anaplasma marginale (strain Florida)).